The following is a 223-amino-acid chain: Probable chemoreceptor glutamine deamidase CheD (223 aa).

Residues 189-223 (QTASAKAHTPPQIERFSAPAKPRFERFTRPSTATS) form a disordered region.

This sequence belongs to the CheD family.

The enzyme catalyses L-glutaminyl-[protein] + H2O = L-glutamyl-[protein] + NH4(+). Its function is as follows. Probably deamidates glutamine residues to glutamate on methyl-accepting chemotaxis receptors (MCPs), playing an important role in chemotaxis. This is Probable chemoreceptor glutamine deamidase CheD from Bordetella petrii (strain ATCC BAA-461 / DSM 12804 / CCUG 43448).